The sequence spans 340 residues: DNA-directed RNA polymerase subunit alpha (340 aa).

The alpha N-terminal domain (alpha-NTD) stretch occupies residues 1–233 (MYRNWRDLIS…EQLSIFINFD (233 aa)). The tract at residues 251-340 (INENLYRSVD…RLRGERKDEE (90 aa)) is alpha C-terminal domain (alpha-CTD).

This sequence belongs to the RNA polymerase alpha chain family. Homodimer. The RNAP catalytic core consists of 2 alpha, 1 beta, 1 beta' and 1 omega subunit. When a sigma factor is associated with the core the holoenzyme is formed, which can initiate transcription.

It carries out the reaction RNA(n) + a ribonucleoside 5'-triphosphate = RNA(n+1) + diphosphate. Its function is as follows. DNA-dependent RNA polymerase catalyzes the transcription of DNA into RNA using the four ribonucleoside triphosphates as substrates. The chain is DNA-directed RNA polymerase subunit alpha from Geobacter sulfurreducens (strain ATCC 51573 / DSM 12127 / PCA).